The chain runs to 881 residues: EEF1AKMT4-ECE2 readthrough transcript protein (881 aa).

The interval 1 to 160 is methyltransferase-like region; it reads MASPRTPVSP…VHTVDQVLSE (160 aa). Over 1–178 the chain is Cytoplasmic; it reads MASPRTPVSP…QLFGSHTQLE (178 aa). Residues W26 and Y30 each coordinate S-adenosyl-L-methionine. Residue Y39 is modified to Phosphotyrosine. Residues W41, G66, 88-89, 113-114, and K130 each bind S-adenosyl-L-methionine; these read DY and DV. H174 carries the post-translational modification Phosphoserine. Residues 179-199 form a helical; Signal-anchor for type II membrane protein membrane-spanning segment; it reads LVLAGLILVLAALLLGCLVAL. Topologically, residues 200 to 881 are lumenal; that stretch reads WVHRDPAHST…MNPGQLCEVW (682 aa). A Peptidase M13 domain is found at 209-881; that stretch reads TCVTEACIRV…MNPGQLCEVW (673 aa). 5 disulfides stabilise this stretch: C210–C215, C233–C866, C241–C826, C297–C546, and C755–C878. N277, N281, N322, N382, N427, N494, and N650 each carry an N-linked (GlcNAc...) asparagine glycan. H718 contributes to the Zn(2+) binding site. Residue E719 is part of the active site. A Zn(2+)-binding site is contributed by H722. N-linked (GlcNAc...) asparagine glycans are attached at residues N743 and N751. A Zn(2+)-binding site is contributed by E778. D782 functions as the Proton donor in the catalytic mechanism.

The protein in the N-terminal section; belongs to the methyltransferase superfamily. In the C-terminal section; belongs to the peptidase M13 family. Requires Zn(2+) as cofactor. In terms of tissue distribution, expressed at high levels in central nervous system. Expressed in adrenal glands, ovary and uterus, and at low levels in heart.

It is found in the golgi apparatus membrane. The protein resides in the cytoplasmic vesicle. Its subcellular location is the secretory vesicle membrane. The catalysed reaction is Hydrolysis of the 21-Trp-|-Val-22 bond in big endothelin to form endothelin 1.. Inhibited by phosphoramidon. In terms of biological role, converts big endothelin-1 to endothelin-1. May also have methyltransferase activity. May play a role in amyloid-beta processing. The protein is EEF1AKMT4-ECE2 readthrough transcript protein of Mus musculus (Mouse).